The following is a 324-amino-acid chain: Probable non-intrinsic ABC protein 5 (324 aa).

The ABC transporter domain maps to 2 to 111; sequence DRERYDKVIE…ADLTLVMKDG (110 aa). A run of 2 helical transmembrane segments spans residues 212–232 and 259–279; these read YITLAYGGALVPFILLGQILF and LSTLMVVYVALAFGSSLCILV. Residues 222 to 324 enclose the ABC transmembrane type-1 domain; it reads VPFILLGQIL…TCSKTCIYSS (103 aa).

Belongs to the ABC transporter superfamily.

The protein resides in the membrane. In Arabidopsis thaliana (Mouse-ear cress), this protein is Probable non-intrinsic ABC protein 5 (NAP5).